The sequence spans 216 residues: uncharacterized protein (216 aa).

2 residues coordinate S-adenosyl-L-methionine: glycine 56 and glutamate 77.

This sequence belongs to the methyltransferase superfamily. YrrT family.

Functionally, could be a S-adenosyl-L-methionine-dependent methyltransferase. This is an uncharacterized protein from Alkaliphilus oremlandii (strain OhILAs) (Clostridium oremlandii (strain OhILAs)).